The following is a 487-amino-acid chain: Sensor protein CseC (487 aa).

Positions 1-11 (MRGNLRRPGPA) are enriched in low complexity. Residues 1–41 (MRGNLRRPGPAGTAGPGRTGIRTSADGGRARPRTGAGTGVR) are disordered. 2 consecutive transmembrane segments (helical) span residues 63–83 (ISAAIALVGALVALALSLVVH) and 185–205 (ALIIGSIAVVFGGSALGVLIG). The 57-residue stretch at 206–262 (GQLSRRLRKAAAAANQVAQGERDVRVRDAIGGVVRDETDDLARAVDAMADALQQRIE) folds into the HAMP domain. A Histidine kinase domain is found at 270–472 (DIAHELRTPV…VAVLWLPEHA (203 aa)). H273 is subject to Phosphohistidine; by autocatalysis.

It localises to the cell membrane. The enzyme catalyses ATP + protein L-histidine = ADP + protein N-phospho-L-histidine.. This Streptomyces avermitilis (strain ATCC 31267 / DSM 46492 / JCM 5070 / NBRC 14893 / NCIMB 12804 / NRRL 8165 / MA-4680) protein is Sensor protein CseC (cseC).